We begin with the raw amino-acid sequence, 200 residues long: Peptidyl-tRNA hydrolase (200 aa).

Tyrosine 17 lines the tRNA pocket. Residue histidine 22 is the Proton acceptor of the active site. Tyrosine 78, asparagine 80, and asparagine 126 together coordinate tRNA.

Belongs to the PTH family. In terms of assembly, monomer.

Its subcellular location is the cytoplasm. The catalysed reaction is an N-acyl-L-alpha-aminoacyl-tRNA + H2O = an N-acyl-L-amino acid + a tRNA + H(+). Hydrolyzes ribosome-free peptidyl-tRNAs (with 1 or more amino acids incorporated), which drop off the ribosome during protein synthesis, or as a result of ribosome stalling. In terms of biological role, catalyzes the release of premature peptidyl moieties from peptidyl-tRNA molecules trapped in stalled 50S ribosomal subunits, and thus maintains levels of free tRNAs and 50S ribosomes. In Cutibacterium acnes (strain DSM 16379 / KPA171202) (Propionibacterium acnes), this protein is Peptidyl-tRNA hydrolase.